The primary structure comprises 421 residues: ATP-dependent RNA helicase RhlB (421 aa).

The Q motif motif lies at 9–37; the sequence is QKFSDFALHPKVIEALENKGFHNCTPIQA. Residues 40 to 219 form the Helicase ATP-binding domain; sequence LPLTLAGRDV…FEQMNNAEYV (180 aa). 53–60 provides a ligand contact to ATP; that stretch reads AQTGTGKT. A DEAD box motif is present at residues 165-168; sequence DEAD. Residues 245-390 form the Helicase C-terminal domain; sequence RLLQTLIEEE…VSKYNPEALM (146 aa). The disordered stretch occupies residues 393-421; it reads LPKPLRLTRSRPGNGPRRTGAPRNRRRSG. Over residues 403–414 the composition is skewed to low complexity; the sequence is RPGNGPRRTGAP.

It belongs to the DEAD box helicase family. RhlB subfamily. As to quaternary structure, component of the RNA degradosome, which is a multiprotein complex involved in RNA processing and mRNA degradation.

It localises to the cytoplasm. It carries out the reaction ATP + H2O = ADP + phosphate + H(+). In terms of biological role, DEAD-box RNA helicase involved in RNA degradation. Has RNA-dependent ATPase activity and unwinds double-stranded RNA. In Citrobacter koseri (strain ATCC BAA-895 / CDC 4225-83 / SGSC4696), this protein is ATP-dependent RNA helicase RhlB.